A 761-amino-acid chain; its full sequence is Prolyl oligopeptidase A (761 aa).

Active-site charge relay system residues include Ser-606, Asp-690, and His-726.

Belongs to the peptidase S9A family. As to quaternary structure, monomer.

The catalysed reaction is Hydrolysis of Pro-|-Xaa &gt;&gt; Ala-|-Xaa in oligopeptides.. Housekeeping prolyl oligopeptidase (POP) that behaves like a conventional POP by cleaving peptide bonds on the C-terminal side of prolyl residues within peptides that are up to approximately 30 amino acids long. The protein is Prolyl oligopeptidase A of Amanita bisporigera (Destroying angel).